The following is a 574-amino-acid chain: K(+)/H(+) antiporter NhaP2 (574 aa).

A run of 13 helical transmembrane segments spans residues 6–26, 34–54, 58–78, 87–107, 109–129, 173–193, 196–216, 219–239, 242–262, 271–291, 299–319, 335–355, and 359–379; these read INSF…LSPV, ILLI…GGIL, YSTA…DGGM, VALW…TSIT, VMAA…GAIV, IAIL…ISFI, FGLG…LVNL, LAEG…YAAS, LGGS…NKPT, VLDG…GLLL, IWLP…PLAV, WFIS…VFPM, and LPGA…SLLV. An RCK C-terminal domain is found at 405 to 486; it reads SGVEIYPSSE…LEALSNLFSQ (82 aa).

Belongs to the monovalent cation:proton antiporter 1 (CPA1) transporter (TC 2.A.36) family. NhaP2 subfamily.

It localises to the cell inner membrane. It catalyses the reaction K(+)(in) + H(+)(out) = K(+)(out) + H(+)(in). Functionally, k(+)/H(+) antiporter that extrudes potassium in exchange for external protons and maintains the internal concentration of potassium under toxic levels. In Shewanella sp. (strain ANA-3), this protein is K(+)/H(+) antiporter NhaP2.